Consider the following 104-residue polypeptide: Transcription factor S (104 aa).

8 residues coordinate Zn(2+): cysteine 4, cysteine 7, cysteine 20, cysteine 22, cysteine 65, cysteine 68, cysteine 93, and cysteine 96. The segment at 4-22 (CPKCGAVMFPSEGKFKCQC) adopts a C4-type zinc-finger fold. The TFIIS-type zinc-finger motif lies at 61–101 (TRVECPKCGNMEAFWWLQQTRRADESETRFFRCTRCKHTWR).

The protein belongs to the archaeal RpoM/eukaryotic RPA12/RPB9/RPC11 RNA polymerase family.

Functionally, induces RNA cleavage activity in the RNA polymerase. In its presence, the cleavage activity of the RNA polymerase truncates the RNA back to position +15 in a stepwise manner by releasing mainly dinucleotides from the 3'-end of the nascent RNA. The truncated RNAs are able to continue elongation. Involved in transcriptional proofreading and fidelity. Misincorporation of nucleotides during elongation of transcription leads to arrested elongation complexes which are rescued by TFS-promoted removal of a dinucleotide from the 3'-end. TFS is able to induce a cleavage resynthesis cycle in stalled elongation complexes (resulting from the next missing nucleotide or a reduced incorporation rate of a wrong nucleotide) preventing misincorporation and enabling proofreading in a post-incorporation manner. Pausing of elongation complexes is the main determinant of TFS-induced RNA cleavage. The sequence is that of Transcription factor S from Methanothermobacter thermautotrophicus (strain ATCC 29096 / DSM 1053 / JCM 10044 / NBRC 100330 / Delta H) (Methanobacterium thermoautotrophicum).